The sequence spans 261 residues: DNA oxidative demethylase ALKBH2 (261 aa).

The interval Met-1–Trp-57 is disordered. A PCNA-binding motif is present at residues Arg-3–Lys-7. Residues Phe-102–Lys-104 and Tyr-122–Phe-124 each bind substrate. Residues Thr-152–Leu-257 form the Fe2OG dioxygenase domain. Residues Asn-159, Tyr-161, and His-171 each coordinate 2-oxoglutarate. His-171 and Asp-173 together coordinate Fe cation. Asp-174 contributes to the substrate binding site. Residues His-236, Arg-248, Thr-252, and Arg-254 each contribute to the 2-oxoglutarate site. Fe cation is bound at residue His-236.

Belongs to the alkB family. In terms of assembly, interacts with PCNA homotrimer; this interaction is enhanced during the S-phase of the cell cycle. Interacts with nucleolar proteins NCL, UBTF and NPM1. Interacts with XRCC5-XRCC6 heterodimer. Fe(2+) serves as cofactor. Detected in colon, small intestine, ovary, testis, prostate, skeletal muscle, heart, liver and urinary bladder.

It localises to the nucleus. The protein resides in the nucleolus. The protein localises to the nucleoplasm. It carries out the reaction a methylated nucleobase within DNA + 2-oxoglutarate + O2 = a nucleobase within DNA + formaldehyde + succinate + CO2. The enzyme catalyses an N(1)-methyl-2'-deoxyadenosine in double-stranded DNA + 2-oxoglutarate + O2 = a 2'-deoxyadenosine in double-stranded DNA + formaldehyde + succinate + CO2 + H(+). It catalyses the reaction an N(1)-methyl-2'-deoxyadenosine in single-stranded DNA + 2-oxoglutarate + O2 = a 2'-deoxyadenosine in single-stranded DNA + formaldehyde + succinate + CO2 + H(+). The catalysed reaction is an N(3)-methyl-2'-deoxycytidine in double-stranded DNA + 2-oxoglutarate + O2 = a 2'-deoxycytidine in double-stranded DNA + formaldehyde + succinate + CO2 + H(+). It carries out the reaction an N(3)-methyl-2'-deoxycytidine in single-stranded DNA + 2-oxoglutarate + O2 = a 2'-deoxycytidine in single-stranded DNA + formaldehyde + succinate + CO2 + H(+). The enzyme catalyses a 1,N(6)-etheno-2'-deoxyadenosine in double-stranded DNA + 2-oxoglutarate + O2 + H2O = a 2'-deoxyadenosine in double-stranded DNA + glyoxal + succinate + CO2. It catalyses the reaction a 1,N(6)-etheno-2'-deoxyadenosine in single-stranded DNA + 2-oxoglutarate + O2 + H2O = a 2'-deoxyadenosine in single-stranded DNA + glyoxal + succinate + CO2. The catalysed reaction is a 3,N(4)-etheno-2'-deoxycytidine in double-stranded DNA + 2-oxoglutarate + O2 + H2O = a 2'-deoxycytidine in double-stranded DNA + glyoxal + succinate + CO2. It carries out the reaction a 3,N(4)-etheno-2'-deoxycytidine in single-stranded DNA + 2-oxoglutarate + O2 + H2O = a 2'-deoxycytidine in single-stranded DNA + glyoxal + succinate + CO2. The enzyme catalyses a 1,N(2)-etheno-2'-deoxyguanosine in double-stranded DNA + 2-oxoglutarate + O2 + H2O = a 2'-deoxyguanosine in double-stranded DNA + glyoxal + succinate + CO2. Its activity is regulated as follows. Activated by ascorbate and magnesium ions. Dioxygenase that repairs alkylated nucleic acid bases by direct reversal oxidative dealkylation. Can process both double-stranded (ds) and single-stranded (ss) DNA substrates, with a strong preference for dsDNA. Uses molecular oxygen, 2-oxoglutarate and iron as cofactors to oxidize the alkyl groups that are subsequently released as aldehydes, regenerating the undamaged bases. Probes the base pair stability, locates a weakened base pair and flips the damaged base to accommodate the lesion in its active site for efficient catalysis. Repairs monoalkylated bases, specifically N1-methyladenine and N3-methylcytosine, as well as higher order alkyl adducts such as bases modified with exocyclic bridged adducts known as etheno adducts including 1,N6-ethenoadenine, 3,N4-ethenocytosine and 1,N2-ethenoguanine. Acts as a gatekeeper of genomic integrity under alkylation stress. Efficiently repairs alkylated lesions in ribosomal DNA (rDNA). These lesions can cause ss- and dsDNA strand breaks that severely impair rDNA transcription. In a response mechanism to DNA damage, associates with PCNA at replication forks to repair alkylated adducts prior to replication. This chain is DNA oxidative demethylase ALKBH2 (ALKBH2), found in Homo sapiens (Human).